We begin with the raw amino-acid sequence, 444 residues long: DNA repair protein RadA (444 aa).

A C4-type zinc finger spans residues 8–25; sequence CSNCGNISPKWSGQCFDC. ATP is bound at residue 89 to 96; sequence GDPGIGKS. Positions 248 to 252 match the RadA KNRFG motif motif; the sequence is KNRFG. The segment at 347-444 is lon-protease-like; it reads EVYLSIAGGL…HLKDLKEIIK (98 aa).

The protein belongs to the RecA family. RadA subfamily.

Its function is as follows. DNA-dependent ATPase involved in processing of recombination intermediates, plays a role in repairing DNA breaks. Stimulates the branch migration of RecA-mediated strand transfer reactions, allowing the 3' invading strand to extend heteroduplex DNA faster. Binds ssDNA in the presence of ADP but not other nucleotides, has ATPase activity that is stimulated by ssDNA and various branched DNA structures, but inhibited by SSB. Does not have RecA's homology-searching function. The chain is DNA repair protein RadA from Rickettsia conorii (strain ATCC VR-613 / Malish 7).